Consider the following 759-residue polypeptide: Tripartite motif-containing protein 46 (759 aa).

Residues 1–166 are required for proximal axon localization, axon formation and migration; sequence MAEGEDMQTF…VERYRQSVSV (166 aa). The segment at 33–59 adopts an RING-type 1; degenerate zinc-finger fold; it reads CPVCQEMYKQPLVLPCTHNVCQACARE. The segment at 67 to 98 is disordered; that stretch reads IGHGGDPSSEPTSPASTPSTRSPRLSRRTLPK. Low complexity predominate over residues 73–89; the sequence is PSSEPTSPASTPSTRSP. The RING-type 2; degenerate zinc finger occupies 172–231; it reads CQLCKPPPLEATKGCTECRATFCNECFKLFHPWGTQKAQHEPTLPTLSFRPKGLMCPDHK. The segment at 222–263 adopts a B box-type zinc-finger fold; sequence PKGLMCPDHKEEVTHYCKTCQRLVCQLCRVRRTHSGHKITPV. Cys227, His230, Cys249, and His255 together coordinate Zn(2+). Residues 322–400 are a coiled coil; sequence AVLEEKRASL…RATEALQTFR (79 aa). Ser330 carries the phosphoserine modification. A COS domain is found at 370 to 427; that stretch reads LKETDQPCFVQAAKQLHNRIARATEALQTFRPAASSSFRHCQLDVGREMKLLTELSFL. Residues 411-429 form a required for microtubule association, proximal axon localization and axon formation region; sequence QLDVGREMKLLTELSFLRV. In terms of domain architecture, Fibronectin type-III spans 429–528; that stretch reads VPEAPVIDTQ…EDVHLHTPPA (100 aa). The region spanning 526–747 is the B30.2/SPRY domain; sequence PPAPVLHFFL…LQEPVGTKPE (222 aa). A Phosphoserine modification is found at Ser627.

This sequence belongs to the TRIM/RBCC family. In terms of assembly, interacts with TUBB3 and TUBA4A. Expressed in the central nervous system, including pyramidal neurons and interneurons in the cortex and hippocampus and all neuronal cell types in the cerebral and cerebellar cortex, and in the peripheral nervous system, including the dorsal root ganglion neurons.

It is found in the cell projection. The protein resides in the axon. It localises to the cytoplasm. The protein localises to the cytoskeleton. Microtubule-associated protein that is involved in the formation of parallel microtubule bundles linked by cross-bridges in the proximal axon. Required for the uniform orientation and maintenance of the parallel microtubule fascicles, which are important for efficient cargo delivery and trafficking in axons. Thereby also required for proper axon formation, the establishment of neuronal polarity and proper neuronal migration. The polypeptide is Tripartite motif-containing protein 46 (Trim46) (Mus musculus (Mouse)).